Here is a 646-residue protein sequence, read N- to C-terminus: Secretogranin-1 (646 aa).

Positions 1-20 are cleaved as a signal peptide; that stretch reads MQPAALLGLLGATVVAAVSS. Cysteines 36 and 57 form a disulfide. Residues 67 to 90 are compositionally biased toward basic and acidic residues; that stretch reads ELKNEEKSENENTRFEVRLLRDPA. Residues 67-483 form a disordered region; sequence ELKNEEKSEN…GKQYAPHHIT (417 aa). At serine 74 the chain carries Phosphoserine. Threonine 79 and threonine 92 each carry phosphothreonine. Phosphoserine is present on residues serine 93, serine 99, serine 100, and serine 104. O-linked (Xyl...) (chondroitin sulfate) serine glycosylation occurs at serine 93. O-linked (GalNAc...) threonine glycosylation is present at threonine 113. Composition is skewed to basic and acidic residues over residues 119–128 and 137–173; these read SGGHSRERAG and KEAKTRYSKSEGQNREEEMVKYQKRERGEVGSEERLS. Serine 123, serine 146, and serine 168 each carry phosphoserine. A compositionally biased stretch (polar residues) spans 182 to 191; the sequence is AFLNQRNQTP. Threonine 190 is a glycosylation site (O-linked (GalNAc...) threonine). Serine 205 is modified (phosphoserine). Over residues 208–228 the composition is skewed to basic and acidic residues; that stretch reads GLEKSHSRERSSQESGEETKS. Serine 222 carries O-linked (Xyl...) (chondroitin sulfate) serine glycosylation. A compositionally biased stretch (basic residues) spans 260–270; it reads RHSRPRHHHGR. Serine 276, serine 277, and serine 295 each carry phosphoserine. At tyrosine 315 the chain carries Sulfotyrosine. The span at 340 to 361 shows a compositional bias: basic and acidic residues; sequence GRGEHQALRRPSEESLEQENKR. Residues serine 351 and serine 354 each carry the phosphoserine modification. Tyrosine 374 is subject to Phosphotyrosine. Serine 375 and serine 378 each carry phosphoserine. Over residues 406–425 the composition is skewed to basic and acidic residues; the sequence is TDEKRFLGETHHRVQESQRD. Tyrosine 441 carries the sulfotyrosine modification. Basic and acidic residues-rich tracts occupy residues 442–451 and 459–472; these read GEEKGEEAAR and DPRDADENREEARL. Glutamine 476 carries the post-translational modification Pyrrolidone carboxylic acid; in secretogranin-1(476-566). 3 positions are modified to phosphoserine: serine 502, serine 503, and serine 514. Tyrosine 535 bears the Sulfotyrosine mark. Glutamine 567 is modified (pyrrolidone carboxylic acid; in peptide BAM-1745). The residue at position 584 (serine 584) is a Phosphoserine. A disordered region spans residues 588-620; it reads PDFYDSEEQMSPQHTAENEEEKAGQGVLTEEEE. A Sulfotyrosine modification is found at tyrosine 591. Serine 593 and serine 598 each carry phosphoserine. Glutamine 634 bears the Pyrrolidone carboxylic acid; in Secretolytin; partial mark.

The protein belongs to the chromogranin/secretogranin protein family. In terms of assembly, interacts with ITPR1 in the secretory granules. O-glycosylated by the trisaccharide, GalNAc-Gal-NeuAc, on 2 sites in the N-terminal. May be glycated. In terms of processing, extensively phosphorylated. Post-translationally, differentially processed on numerous sites throughout the sequence depending on tissue type.

Its subcellular location is the cytoplasmic vesicle. It localises to the secretory vesicle membrane. The protein resides in the secreted. Its function is as follows. Secretogranin-1 is a neuroendocrine secretory granule protein, which may be the precursor for other biologically active peptides. The 16 pairs of basic AA distributed throughout its sequence may be used as proteolytic cleavage sites. In terms of biological role, secretolytin has antibacterial activity. In Bos taurus (Bovine), this protein is Secretogranin-1 (CHGB).